We begin with the raw amino-acid sequence, 381 residues long: tRNA-cytidine(32) 2-sulfurtransferase (381 aa).

The PP-loop motif signature appears at 101 to 106 (SGGKDS). [4Fe-4S] cluster is bound by residues Cys176, Cys179, and Cys267.

The protein belongs to the TtcA family. Homodimer. The cofactor is Mg(2+). [4Fe-4S] cluster is required as a cofactor.

It localises to the cytoplasm. It catalyses the reaction cytidine(32) in tRNA + S-sulfanyl-L-cysteinyl-[cysteine desulfurase] + AH2 + ATP = 2-thiocytidine(32) in tRNA + L-cysteinyl-[cysteine desulfurase] + A + AMP + diphosphate + H(+). Its pathway is tRNA modification. Its function is as follows. Catalyzes the ATP-dependent 2-thiolation of cytidine in position 32 of tRNA, to form 2-thiocytidine (s(2)C32). The sulfur atoms are provided by the cysteine/cysteine desulfurase (IscS) system. In Psychrobacter arcticus (strain DSM 17307 / VKM B-2377 / 273-4), this protein is tRNA-cytidine(32) 2-sulfurtransferase.